Reading from the N-terminus, the 60-residue chain is Large ribosomal subunit protein bL32 (60 aa).

The protein belongs to the bacterial ribosomal protein bL32 family.

This chain is Large ribosomal subunit protein bL32, found in Moorella thermoacetica (strain ATCC 39073 / JCM 9320).